Reading from the N-terminus, the 160-residue chain is Large ribosomal subunit protein uL16 (160 aa).

Positions 138-148 (KNLEVSSQENT) are enriched in polar residues. The segment at 138–160 (KNLEVSSQENTKNNKESQEEVKQ) is disordered. The segment covering 149 to 160 (KNNKESQEEVKQ) has biased composition (basic and acidic residues).

Belongs to the universal ribosomal protein uL16 family. As to quaternary structure, part of the 50S ribosomal subunit.

Binds 23S rRNA and is also seen to make contacts with the A and possibly P site tRNAs. This Prochlorococcus marinus (strain MIT 9312) protein is Large ribosomal subunit protein uL16.